A 231-amino-acid polypeptide reads, in one-letter code: 5'-methylthioadenosine/S-adenosylhomocysteine nucleosidase (231 aa).

Residue Glu-12 is the Proton acceptor of the active site. Residues Gly-78, Val-153, and 174-175 each bind substrate; that span reads ME. Residue Asp-198 is the Proton donor of the active site.

Belongs to the PNP/UDP phosphorylase family. MtnN subfamily.

It carries out the reaction S-adenosyl-L-homocysteine + H2O = S-(5-deoxy-D-ribos-5-yl)-L-homocysteine + adenine. The enzyme catalyses S-methyl-5'-thioadenosine + H2O = 5-(methylsulfanyl)-D-ribose + adenine. It catalyses the reaction 5'-deoxyadenosine + H2O = 5-deoxy-D-ribose + adenine. It participates in amino-acid biosynthesis; L-methionine biosynthesis via salvage pathway; S-methyl-5-thio-alpha-D-ribose 1-phosphate from S-methyl-5'-thioadenosine (hydrolase route): step 1/2. Catalyzes the irreversible cleavage of the glycosidic bond in both 5'-methylthioadenosine (MTA) and S-adenosylhomocysteine (SAH/AdoHcy) to adenine and the corresponding thioribose, 5'-methylthioribose and S-ribosylhomocysteine, respectively. Also cleaves 5'-deoxyadenosine, a toxic by-product of radical S-adenosylmethionine (SAM) enzymes, into 5-deoxyribose and adenine. This is 5'-methylthioadenosine/S-adenosylhomocysteine nucleosidase from Vibrio vulnificus (strain YJ016).